Reading from the N-terminus, the 153-residue chain is Superoxide dismutase [Cu-Zn] (153 aa).

3 residues coordinate Cu cation: His46, His48, and His63. Cysteines 57 and 146 form a disulfide. Residues His63, His71, His80, and Asp83 each coordinate Zn(2+). His120 is a Cu cation binding site.

Belongs to the Cu-Zn superoxide dismutase family. As to quaternary structure, homodimer. Cu cation serves as cofactor. It depends on Zn(2+) as a cofactor.

Its subcellular location is the cytoplasm. It carries out the reaction 2 superoxide + 2 H(+) = H2O2 + O2. Functionally, destroys radicals which are normally produced within the cells and which are toxic to biological systems. This Solidago canadensis var. scabra (Tall goldenrod) protein is Superoxide dismutase [Cu-Zn] (SODCC).